Consider the following 585-residue polypeptide: Arginine--tRNA ligase (585 aa).

The 'HIGH' region motif lies at 131 to 141 (ANPTGPMHVGH).

This sequence belongs to the class-I aminoacyl-tRNA synthetase family. Monomer.

The protein resides in the cytoplasm. It carries out the reaction tRNA(Arg) + L-arginine + ATP = L-arginyl-tRNA(Arg) + AMP + diphosphate. This Brucella ovis (strain ATCC 25840 / 63/290 / NCTC 10512) protein is Arginine--tRNA ligase.